The following is a 335-amino-acid chain: MSWFTPEVIDVIIQVVKAIVVLLAVVVCGALLSFVERRLLGWWQDRYGPNRVGPFGMFQIAADMLKMFFKEDWNPPFVDKMIFTLAPVVAMSALLIGFSIIPITPGWGVADLNIGLLFFFAMAGLSVYAVLFAGWSSNNKYALLGSLRASAQTVSYEVFLGLALMGVVVQVGSFNMRDIVEYQAQNLWFIIPQFFGFCTFFIAGVAVTHRHPFDQPEAEQELADGYHIEYAGMKWGMFFVGEYIGIILISALLVTLFFGGWHGPFGILPQVPFLWFALKTAFFIMLFILLRASIPRPRYDQVMDFSWKFCLPLTLINLLVTAAIVLYNTPAVAAQ.

8 helical membrane-spanning segments follow: residues 15–35 (VVKAIVVLLAVVVCGALLSFV), 81–101 (MIFTLAPVVAMSALLIGFSII), 114–134 (IGLLFFFAMAGLSVYAVLFAG), 154–174 (VSYEVFLGLALMGVVVQVGSF), 187–207 (LWFIIPQFFGFCTFFIAGVAV), 238–258 (FFVGEYIGIILISALLVTLFF), 270–290 (QVPFLWFALKTAFFIMLFILL), and 307–327 (WKFCLPLTLINLLVTAAIVLY).

Belongs to the complex I subunit 1 family. NDH-1 is composed of 13 different subunits. Subunits NuoA, H, J, K, L, M, N constitute the membrane sector of the complex.

It is found in the cell inner membrane. It carries out the reaction a quinone + NADH + 5 H(+)(in) = a quinol + NAD(+) + 4 H(+)(out). Functionally, NDH-1 shuttles electrons from NADH, via FMN and iron-sulfur (Fe-S) centers, to quinones in the respiratory chain. The immediate electron acceptor for the enzyme in this species is believed to be ubiquinone. Couples the redox reaction to proton translocation (for every two electrons transferred, four hydrogen ions are translocated across the cytoplasmic membrane), and thus conserves the redox energy in a proton gradient. This subunit may bind ubiquinone. The polypeptide is NADH-quinone oxidoreductase subunit H (Pseudomonas putida (strain GB-1)).